An 887-amino-acid polypeptide reads, in one-letter code: Cytoplasmic aconitate hydratase (887 aa).

Residues Q84 and 204-206 (DSH) each bind substrate. Positions 436, 502, and 505 each coordinate [4Fe-4S] cluster. Substrate-binding positions include R535, R540, R697, and 777-778 (SR).

Belongs to the aconitase/IPM isomerase family. Interacts with gex-3. It depends on [4Fe-4S] cluster as a cofactor.

It is found in the cytoplasm. The protein resides in the cytosol. The enzyme catalyses citrate = D-threo-isocitrate. Functionally, catalyzes the isomerization of citrate to isocitrate via cis-aconitate. Has probably no RNA-binding activity. This chain is Cytoplasmic aconitate hydratase (aco-1), found in Caenorhabditis elegans.